Consider the following 1307-residue polypeptide: Cellulose synthase 2 operon protein C (1307 aa).

Residues 1–55 (MTRPRGPAPRDGAAWRRDPARRVLLRDAVRGREGGLRLACAVMAGLIVSGGVACA) form the signal peptide. 9 TPR repeats span residues 97-130 (LELL…EPDN), 270-303 (LDGL…EPIT), 339-372 (AAND…DPHD), 374-406 (DALG…GPDA), 458-491 (LTVL…APRD), 493-525 (GALF…APAM), 528-561 (RLEA…DPDD), 754-787 (IGLA…HPDS), and 788-821 (VEAH…KPAN).

It belongs to the AcsC/BcsC family.

It localises to the cell outer membrane. It functions in the pathway glycan metabolism; bacterial cellulose biosynthesis. Required for maximal bacterial cellulose synthesis. This is Cellulose synthase 2 operon protein C (bcsCII) from Komagataeibacter xylinus (Gluconacetobacter xylinus).